The sequence spans 245 residues: Eukaryotic translation initiation factor 3 subunit K (245 aa).

The PCI domain occupies 46–227 (YDCYANLALL…EAKGTVVREN (182 aa)).

Belongs to the eIF-3 subunit K family. As to quaternary structure, component of the eukaryotic translation initiation factor 3 (eIF-3) complex.

The protein resides in the cytoplasm. In terms of biological role, component of the eukaryotic translation initiation factor 3 (eIF-3) complex, which is involved in protein synthesis of a specialized repertoire of mRNAs and, together with other initiation factors, stimulates binding of mRNA and methionyl-tRNAi to the 40S ribosome. The eIF-3 complex specifically targets and initiates translation of a subset of mRNAs involved in cell proliferation. In Botryotinia fuckeliana (strain B05.10) (Noble rot fungus), this protein is Eukaryotic translation initiation factor 3 subunit K.